Here is a 436-residue protein sequence, read N- to C-terminus: Adenosylhomocysteinase (436 aa).

Substrate-binding residues include threonine 62, aspartate 136, and glutamate 161. 162–164 (TTT) is an NAD(+) binding site. Substrate-binding residues include lysine 191 and aspartate 195. NAD(+) contacts are provided by residues asparagine 196, 225 to 230 (GFGDVG), glutamate 248, asparagine 283, 304 to 306 (IGH), and asparagine 352.

Belongs to the adenosylhomocysteinase family. Requires NAD(+) as cofactor.

Its subcellular location is the cytoplasm. The catalysed reaction is S-adenosyl-L-homocysteine + H2O = L-homocysteine + adenosine. Its pathway is amino-acid biosynthesis; L-homocysteine biosynthesis; L-homocysteine from S-adenosyl-L-homocysteine: step 1/1. May play a key role in the regulation of the intracellular concentration of adenosylhomocysteine. In Leptospira borgpetersenii serovar Hardjo-bovis (strain JB197), this protein is Adenosylhomocysteinase.